The following is a 231-amino-acid chain: UPF0758 protein aq_1610 (231 aa).

The MPN domain occupies 110–231 (SIRNPQEAFE…YFSFREEGVL (122 aa)). 3 residues coordinate Zn(2+): His-180, His-182, and Asp-193. The short motif at 180 to 193 (HNHPQGEPSPSNED) is the JAMM motif element.

It belongs to the UPF0758 family.

This Aquifex aeolicus (strain VF5) protein is UPF0758 protein aq_1610.